The chain runs to 318 residues: Trans-prenyltransferase (318 aa).

A helical membrane pass occupies residues 1 to 21; it reads MLHLIYISIIVVLIIILISYT. Isopentenyl diphosphate is bound by residues Lys85, Arg88, and His122. Positions 129 and 135 each coordinate Mg(2+). Arg140 is a binding site for dimethylallyl diphosphate. Arg141 is a binding site for isopentenyl diphosphate. Lys216, Thr217, and Gln254 together coordinate dimethylallyl diphosphate.

Belongs to the FPP/GGPP synthase family. Asfivirus trans-prenyltransferase subfamily. Mg(2+) is required as a cofactor.

The protein resides in the host endoplasmic reticulum. The protein localises to the host membrane. It catalyses the reaction isopentenyl diphosphate + dimethylallyl diphosphate = (2E)-geranyl diphosphate + diphosphate. It carries out the reaction isopentenyl diphosphate + (2E)-geranyl diphosphate = (2E,6E)-farnesyl diphosphate + diphosphate. The enzyme catalyses isopentenyl diphosphate + (2E,6E)-farnesyl diphosphate = (2E,6E,10E)-geranylgeranyl diphosphate + diphosphate. The catalysed reaction is isopentenyl diphosphate + (2E,6E,10E)-geranylgeranyl diphosphate = (2E,6E,10E,14E)-geranylfarnesyl diphosphate + diphosphate. It participates in isoprenoid biosynthesis; farnesyl diphosphate biosynthesis; farnesyl diphosphate from geranyl diphosphate and isopentenyl diphosphate: step 1/1. Its pathway is isoprenoid biosynthesis; geranyl diphosphate biosynthesis; geranyl diphosphate from dimethylallyl diphosphate and isopentenyl diphosphate: step 1/1. The protein operates within isoprenoid biosynthesis; geranylgeranyl diphosphate biosynthesis; geranylgeranyl diphosphate from farnesyl diphosphate and isopentenyl diphosphate: step 1/1. In terms of biological role, trans-prenyltransferase that catalyzes the sequential condensation of isopentenyl diphosphate (IPP) with different allylic diphosphates, such as dimethylallyl diphosphate (DMAPP), geranyl diphosphate (GPP), farnesyl diphosphate (FPP) and geranylgeranyl diphosphate (GGPP), farnesyl diphosphate being the best allylic substrate. In African swine fever virus (isolate Tick/South Africa/Pretoriuskop Pr4/1996) (ASFV), this protein is Trans-prenyltransferase.